A 100-amino-acid chain; its full sequence is Osteocalcin (100 aa).

An N-terminal signal peptide occupies residues 1–23 (MRALTLLALLALAALCIAGQAGA). Residues 24–51 (KPSGAESSKGAAFVSKQEGSEVVKRPRR) constitute a propeptide that is removed on maturation. The region spanning 52–98 (YLYQWLGAPVPYPDTLEPRREVCELNPDCDELADHIGFQEAYRRFYG) is the Gla domain. Positions 68, 72, 75, and 81 each coordinate Ca(2+). 3 positions are modified to 4-carboxyglutamate: Glu68, Glu72, and Glu75. An intrachain disulfide couples Cys74 to Cys80.

Belongs to the osteocalcin/matrix Gla protein family. In terms of processing, gamma-carboxyglutamate residues are formed by vitamin K dependent carboxylation by GGCX. These residues are essential for the binding of calcium. Decarboxylation promotes the hormone activity.

The protein resides in the secreted. In terms of biological role, the carboxylated form is one of the main organic components of the bone matrix, which constitutes 1-2% of the total bone protein: it acts as a negative regulator of bone formation and is required to limit bone formation without impairing bone resorption or mineralization. The carboxylated form binds strongly to apatite and calcium. Its function is as follows. The uncarboxylated form acts as a hormone secreted by osteoblasts, which regulates different cellular processes, such as energy metabolism, male fertility and brain development. Regulates of energy metabolism by acting as a hormone favoring pancreatic beta-cell proliferation, insulin secretion and sensitivity and energy expenditure. Uncarboxylated osteocalcin hormone also promotes testosterone production in the testes: acts as a ligand for G protein-coupled receptor GPRC6A at the surface of Leydig cells, initiating a signaling response that promotes the expression of enzymes required for testosterone synthesis in a CREB-dependent manner. Also acts as a regulator of brain development: osteocalcin hormone crosses the blood-brain barrier and acts as a ligand for GPR158 on neurons, initiating a signaling response that prevents neuronal apoptosis in the hippocampus, favors the synthesis of all monoamine neurotransmitters and inhibits that of gamma-aminobutyric acid (GABA). Osteocalcin also crosses the placenta during pregnancy and maternal osteocalcin is required for fetal brain development. This is Osteocalcin from Pan troglodytes (Chimpanzee).